The sequence spans 452 residues: Lichenan permease IIC component (452 aa).

In terms of domain architecture, PTS EIIC type-3 spans 8-421 (LEEKVMPIAG…AVSFVVYYPF (414 aa)). A run of 10 helical transmembrane segments spans residues 31–51 (GIIL…IGNL), 72–92 (LAYP…FGIA), 104–124 (LSAG…QVPF), 138–158 (GIPL…IAMV), 187–207 (FVAL…RLIV), 218–238 (IVSV…GGSL), 246–266 (LLWA…APIW), 291–311 (FFDI…VVTM), 351–373 (LLLP…MSTG), and 402–422 (SGAV…YPFF).

The protein localises to the cell membrane. Its function is as follows. The phosphoenolpyruvate-dependent sugar phosphotransferase system (PTS), a major carbohydrate active -transport system, catalyzes the phosphorylation of incoming sugar substrates concomitant with their translocation across the cell membrane. This system is involved in lichenan transport. The polypeptide is Lichenan permease IIC component (licC) (Bacillus subtilis (strain 168)).